A 148-amino-acid polypeptide reads, in one-letter code: 3-hydroxyacyl-[acyl-carrier-protein] dehydratase FabZ (148 aa).

The active site involves His50.

Belongs to the thioester dehydratase family. FabZ subfamily.

It localises to the cytoplasm. The enzyme catalyses a (3R)-hydroxyacyl-[ACP] = a (2E)-enoyl-[ACP] + H2O. Functionally, involved in unsaturated fatty acids biosynthesis. Catalyzes the dehydration of short chain beta-hydroxyacyl-ACPs and long chain saturated and unsaturated beta-hydroxyacyl-ACPs. This Lactobacillus helveticus (strain DPC 4571) protein is 3-hydroxyacyl-[acyl-carrier-protein] dehydratase FabZ.